The following is a 146-amino-acid chain: Angiogenin (146 aa).

Positions 1 to 24 (MVMGLHLLFLVFILGLGLTPPTLA) are cleaved as a signal peptide. Gln25 carries the pyrrolidone carboxylic acid modification. The active-site Proton acceptor is the His37. Cystine bridges form between Cys50-Cys105, Cys63-Cys116, and Cys81-Cys131. The Nucleolar localization signal signature appears at 55-59 (RLRNM). 2 residues coordinate tRNA: Cys105 and Val127. His138 functions as the Proton donor in the catalytic mechanism.

Belongs to the pancreatic ribonuclease family. As to quaternary structure, homodimer. Interacts with RNH1; inhibiting ANG ribonuclease activity. Interacts with PCNA.

Its subcellular location is the secreted. The protein resides in the nucleus. The protein localises to the nucleolus. It is found in the cytoplasm. It localises to the stress granule. Has weak tRNA ribonuclease activity by itself due to partial autoinhibition by its C-terminus, which folds into a short alpha-helix that partially occludes the substrate-binding site. In absence of stress, the ribonuclease activity is inhibited by RNH1 in the cytoplasm. In response to stress, dissociates from RNH1 in the cytoplasm and associates with cytoplasmic ribosomes with vacant A-sites: ribosomes directly activate the tRNA ribonuclease activity of ANG by refolding the C-terminal alpha-helix. In response to stress, the angiogenic activity of ANG is inhibited by RNH1 in the nucleus. Its function is as follows. Secreted ribonuclease that can either promote or restrict cell proliferation of target cells, depending on the context. Endocytosed in target cells via its receptor PLXNB2 and translocates to the cytoplasm or nucleus. Under stress conditions, localizes to the cytoplasm and promotes the assembly of stress granules (SGs): specifically cleaves a subset of tRNAs within anticodon loops to produce tRNA-derived stress-induced fragments (tiRNAs), resulting in translation repression and inhibition of cell proliferation. tiRNas also prevent formation of apoptosome, thereby promoting cell survival. Preferentially cleaves RNAs between a pyrimidine and an adenosine residue, suggesting that it cleaves the anticodon loop of tRNA(Ala) (32-UUAGCAU-38) after positions 33 and 36. Cleaves a subset of tRNAs, including tRNA(Ala), tRNA(Glu), tRNA(Gly), tRNA(Lys), tRNA(Val), tRNA(His), tRNA(Asp) and tRNA(Sec). Under growth conditions and in differentiated cells, translocates to the nucleus and stimulates ribosomal RNA (rRNA) transcription, including that containing the initiation site sequences of 45S rRNA, thereby promoting cell growth and proliferation. Angiogenin induces vascularization of normal and malignant tissues via its ability to promote rRNA transcription. Involved in hematopoietic stem and progenitor cell (HSPC) growth and survival by promoting rRNA transcription in growth conditions and inhibiting translation in response to stress, respectively. Mediates the crosstalk between myeloid and intestinal epithelial cells to protect the intestinal epithelial barrier integrity: secreted by myeloid cells and promotes intestinal epithelial cells proliferation and survival. Also mediates osteoclast-endothelial cell crosstalk in growing bone: produced by osteoclasts and protects the neighboring vascular cells against senescence by promoting rRNA transcription. In Saguinus oedipus (Cotton-top tamarin), this protein is Angiogenin (ANG).